The sequence spans 404 residues: MKIPIYMDYHATTPVDPRVLEAMLPYFTTEYGNAASKSHAFGWKAEEAVEAAREEVAKLIGASAKEIVWTSGATESDNLAVKGAAHFYQAKGKHLVTCKTEHKAVLDSMHALERQGFEVTFLEPERDGRLDPAKVKAALRPDTILVSVMHANNETGVVHPIAEIGRIAREAGVVFHCDAVQSIGKIPFDVEAMNVDLASISAHKMYGPKGVGALYVRRKPRVRLVAEMDGGGHERGFRSGTLNVPGIVGMGKAAELARLERDAEAVRVTALRERLRKGLEQELDLLTVNGSLEHRVPGNLNVSFAYVEGEALMMAVKDVAVSSGSACTSASLEPSYVLRAMGVSEDLAHSSIRFGLGRFSTEEEVDYAIRLFGEKVRKLREMSPLYEMVKDGVDLNQIEWANPH.

Residues 73-74 (AT), N153, Q181, and 201-203 (SAH) contribute to the pyridoxal 5'-phosphate site. Position 204 is an N6-(pyridoxal phosphate)lysine (K204). T241 is a binding site for pyridoxal 5'-phosphate. The active-site Cysteine persulfide intermediate is C327. C327 lines the [2Fe-2S] cluster pocket.

This sequence belongs to the class-V pyridoxal-phosphate-dependent aminotransferase family. NifS/IscS subfamily. Homodimer. Forms a heterotetramer with IscU, interacts with other sulfur acceptors. It depends on pyridoxal 5'-phosphate as a cofactor.

The protein resides in the cytoplasm. It catalyses the reaction (sulfur carrier)-H + L-cysteine = (sulfur carrier)-SH + L-alanine. It participates in cofactor biosynthesis; iron-sulfur cluster biosynthesis. In terms of biological role, master enzyme that delivers sulfur to a number of partners involved in Fe-S cluster assembly, tRNA modification or cofactor biosynthesis. Catalyzes the removal of elemental sulfur atoms from cysteine to produce alanine. Functions as a sulfur delivery protein for Fe-S cluster synthesis onto IscU, an Fe-S scaffold assembly protein, as well as other S acceptor proteins. The protein is Cysteine desulfurase IscS of Anaeromyxobacter dehalogenans (strain 2CP-C).